Reading from the N-terminus, the 465-residue chain is Cysteine--tRNA ligase (465 aa).

Cys-30 is a Zn(2+) binding site. Residues 32–42 carry the 'HIGH' region motif; that stretch reads ITVYDYCHVGH. Zn(2+) contacts are provided by Cys-214, His-239, and Glu-243. Positions 271-275 match the 'KMSKS' region motif; the sequence is KMSKS. Residue Lys-274 coordinates ATP.

This sequence belongs to the class-I aminoacyl-tRNA synthetase family. In terms of assembly, monomer. Requires Zn(2+) as cofactor.

It is found in the cytoplasm. It carries out the reaction tRNA(Cys) + L-cysteine + ATP = L-cysteinyl-tRNA(Cys) + AMP + diphosphate. The sequence is that of Cysteine--tRNA ligase from Burkholderia vietnamiensis (strain G4 / LMG 22486) (Burkholderia cepacia (strain R1808)).